The primary structure comprises 449 residues: Exopolygalacturonase X-2 (449 aa).

An N-terminal signal peptide occupies residues 1–24; it reads MGFKRTIGLLLGILLALDQVSVLA. Residues N136, N172, and N208 are each glycosylated (N-linked (GlcNAc...) asparagine). The PbH1 1 repeat unit spans residues 240–261; the sequence is SDNVVIQNSVINHDDDCVSFKP. D254 functions as the Proton donor in the catalytic mechanism. C256 and C273 are oxidised to a cystine. N262 and N274 each carry an N-linked (GlcNAc...) asparagine glycan. PbH1 repeat units lie at residues 263–283 and 294–315; these read STNIIVQGLHCNGSHGISVGS and VSDLYIYNNTMANTTTAARLKV. Residue H277 is part of the active site. Residues N301, N306, N340, and N365 are each glycosylated (N-linked (GlcNAc...) asparagine). A disulfide bridge connects residues C403 and C409. Residues N416 and N421 are each glycosylated (N-linked (GlcNAc...) asparagine).

Belongs to the glycosyl hydrolase 28 family.

The protein resides in the secreted. The enzyme catalyses [(1-&gt;4)-alpha-D-galacturonosyl](n) + H2O = alpha-D-galacturonate + [(1-&gt;4)-alpha-D-galacturonosyl](n-1). Specific in hydrolyzing the terminal glycosidic bond of polygalacturonic acid and oligogalacturonates. In Emericella nidulans (strain FGSC A4 / ATCC 38163 / CBS 112.46 / NRRL 194 / M139) (Aspergillus nidulans), this protein is Exopolygalacturonase X-2 (pgaX-2).